We begin with the raw amino-acid sequence, 326 residues long: Protein phosphatase PTC7 homolog fig (326 aa).

Residues 40-83 form a disordered region; the sequence is VQGKSKPRSPHLTSPQCSPEHRPRRFRPPSASGRTAFSSAPRPK. One can recognise a PPM-type phosphatase domain in the interval 64–314; sequence RFRPPSASGR…DDITVVLASV (251 aa). Mn(2+) is bound by residues Asp91, Gly92, and Asp236.

This sequence belongs to the PP2C family. The cofactor is Mg(2+). Mn(2+) serves as cofactor.

The enzyme catalyses O-phospho-L-seryl-[protein] + H2O = L-seryl-[protein] + phosphate. It catalyses the reaction O-phospho-L-threonyl-[protein] + H2O = L-threonyl-[protein] + phosphate. The protein is Protein phosphatase PTC7 homolog fig of Drosophila persimilis (Fruit fly).